A 335-amino-acid chain; its full sequence is Fimbrial adhesin PapGIII (335 aa).

Positions 1–21 (MKKWLPAFLFLSLSGCNDALA) are cleaved as a signal peptide.

It belongs to the adhesin PapG family.

It is found in the secreted. The protein localises to the fimbrium. Functionally, tip adhesin component of type P pili that binds preferentially to Gal-alpha(1-4)-Gal-containing glycolipids such as globoside. This tip is common in E.coli strains that cause human cystitis, but rare in pyelonephritic isolates. This chain is Fimbrial adhesin PapGIII, found in Escherichia coli.